We begin with the raw amino-acid sequence, 294 residues long: 4-hydroxy-tetrahydrodipicolinate synthase (294 aa).

T49 serves as a coordination point for pyruvate. The Proton donor/acceptor role is filled by Y136. K164 functions as the Schiff-base intermediate with substrate in the catalytic mechanism. Position 207 (I207) interacts with pyruvate.

This sequence belongs to the DapA family. Homotetramer; dimer of dimers.

It is found in the cytoplasm. It catalyses the reaction L-aspartate 4-semialdehyde + pyruvate = (2S,4S)-4-hydroxy-2,3,4,5-tetrahydrodipicolinate + H2O + H(+). It participates in amino-acid biosynthesis; L-lysine biosynthesis via DAP pathway; (S)-tetrahydrodipicolinate from L-aspartate: step 3/4. Functionally, catalyzes the condensation of (S)-aspartate-beta-semialdehyde [(S)-ASA] and pyruvate to 4-hydroxy-tetrahydrodipicolinate (HTPA). In Natronomonas pharaonis (strain ATCC 35678 / DSM 2160 / CIP 103997 / JCM 8858 / NBRC 14720 / NCIMB 2260 / Gabara) (Halobacterium pharaonis), this protein is 4-hydroxy-tetrahydrodipicolinate synthase.